The sequence spans 777 residues: Ethylene receptor 4 (777 aa).

Transmembrane regions (helical) follow at residues 49–69 (LLIA…ATCA), 77–97 (AVLH…LAAF), and 113–133 (AAKV…LTFI). Residues Cys88 and His92 each coordinate Cu cation. Residues 184 to 344 (DAHAILRTTA…VVADQAAVAL (161 aa)) enclose the GAF domain. Residues 387–521 (AMCHAMRRPV…NTESGACRLS (135 aa)) form the Histidine kinase domain. A Phosphohistidine; by autocatalysis modification is found at His390. The Response regulatory domain maps to 645 to 774 (RVLLADDDAM…ALGAQLCRVL (130 aa)). At Asp696 the chain carries 4-aspartylphosphate.

Belongs to the ethylene receptor family. It depends on Cu cation as a cofactor.

The protein localises to the endoplasmic reticulum membrane. It catalyses the reaction ATP + protein L-histidine = ADP + protein N-phospho-L-histidine.. Its function is as follows. Ethylene receptor related to bacterial two-component regulators. Acts as a redundant negative regulator of ethylene signaling. The protein is Ethylene receptor 4 of Oryza sativa subsp. indica (Rice).